The following is a 298-amino-acid chain: Protoheme IX farnesyltransferase (298 aa).

Transmembrane regions (helical) follow at residues 23-43 (LLLLFTMYTAYIVGGGLGKPY), 47-67 (LVVLTLGFITIAAVTALNMYF), 93-113 (VFIATVAATIVSVILAWRIIN), 115-135 (HFALAIVIGFLFDIVAYTYLL), 143-163 (IIAGAVAGGAPALGGWAAAAG), 169-189 (ALLFSLIVATWVPSHIWFLAT), 211-231 (IAVASGIGLGSLVMGYSIVGL), 236-256 (VIGTVSLIVGVIAAIAIFHLA), and 278-298 (MMLGLVFLVMMLEKVVSYIIS).

This sequence belongs to the UbiA prenyltransferase family. Protoheme IX farnesyltransferase subfamily.

Its subcellular location is the cell membrane. The enzyme catalyses heme b + (2E,6E)-farnesyl diphosphate + H2O = Fe(II)-heme o + diphosphate. The protein operates within porphyrin-containing compound metabolism; heme O biosynthesis; heme O from protoheme: step 1/1. Converts heme B (protoheme IX) to heme O by substitution of the vinyl group on carbon 2 of heme B porphyrin ring with a hydroxyethyl farnesyl side group. The chain is Protoheme IX farnesyltransferase from Hyperthermus butylicus (strain DSM 5456 / JCM 9403 / PLM1-5).